The chain runs to 207 residues: UPF0319 protein VV1_2115 (207 aa).

The N-terminal stretch at 1-18 (MLRVLGLAGMLMSFNIHA) is a signal peptide.

It belongs to the UPF0319 family.

The protein is UPF0319 protein VV1_2115 of Vibrio vulnificus (strain CMCP6).